A 338-amino-acid chain; its full sequence is Sesquiterpene synthase 1 (338 aa).

Mg(2+)-binding residues include Asp93, Asn228, Ser232, and Glu236. The short motif at 93 to 97 (DNISD) is the DDXXD motif element. The short motif at 228–236 (NDIFSYNVE) is the NSE/DTE motif element. Positions 316 and 317 each coordinate (2E,6E)-farnesyl diphosphate.

The protein belongs to the terpene synthase family. Mg(2+) serves as cofactor.

It catalyses the reaction (2E,6E)-farnesyl diphosphate = alpha-copaene + diphosphate. The catalysed reaction is (2E,6E)-farnesyl diphosphate = beta-copaene + diphosphate. It carries out the reaction (2E,6E)-farnesyl diphosphate = alpha-muurolene + diphosphate. The enzyme catalyses (2E,6E)-farnesyl diphosphate = gamma-muurolene + diphosphate. It catalyses the reaction (2E,6E)-farnesyl diphosphate = delta-cadinene + diphosphate. In terms of biological role, terpene cyclase that catalyzes the cyclization of farnesyl diphosphate (FPP) to various sesquiterpenes, including alpha-copaene, beta-copaene, beta-elemene, alpha-muurolene, gamma-muurolene and delta-cadinene. This chain is Sesquiterpene synthase 1, found in Postia placenta (strain ATCC 44394 / Madison 698-R) (Brown rot fungus).